Consider the following 1414-residue polypeptide: Phenyloxazoline synthase MbtB (1414 aa).

Residues Thr5 to Thr78 form the Carrier 1 domain. Position 39 is an O-(pantetheine 4'-phosphoryl)serine (Ser39). A condensation/cyclization region spans residues Glu96 to Thr394. The segment at Ser579 to Ala975 is adenylation. The Carrier 2 domain maps to Ala1057–Glu1135. Ser1094 is subject to O-(pantetheine 4'-phosphoryl)serine. The thioesterase stretch occupies residues Gly1188–Val1413.

It belongs to the ATP-dependent AMP-binding enzyme family. MbtB subfamily. The cofactor is pantetheine 4'-phosphate. Post-translationally, 4'-phosphopantetheine is transferred from CoA to a specific serine in each of the two carrier protein domains, leading to their activation from apo to holo forms.

It participates in siderophore biosynthesis; mycobactin biosynthesis. Its function is as follows. Involved in the initial steps of the mycobactin biosynthetic pathway. Putatively couples activated salicylic acid with serine or threonine and cyclizes this precursor to the hydroxyphenyloxazoline ring system present in this class of siderophores. Essential for growth in macrophages. The chain is Phenyloxazoline synthase MbtB (mbtB) from Mycobacterium tuberculosis (strain ATCC 25618 / H37Rv).